The chain runs to 612 residues: Dihydroxy-acid dehydratase (612 aa).

Mg(2+) is bound at residue Asp81. Residue Cys122 participates in [2Fe-2S] cluster binding. Positions 123 and 124 each coordinate Mg(2+). The residue at position 124 (Lys124) is an N6-carboxylysine. Cys195 is a [2Fe-2S] cluster binding site. Glu491 contributes to the Mg(2+) binding site. Ser517 (proton acceptor) is an active-site residue.

Belongs to the IlvD/Edd family. In terms of assembly, homodimer. [2Fe-2S] cluster is required as a cofactor. It depends on Mg(2+) as a cofactor.

The enzyme catalyses (2R)-2,3-dihydroxy-3-methylbutanoate = 3-methyl-2-oxobutanoate + H2O. The catalysed reaction is (2R,3R)-2,3-dihydroxy-3-methylpentanoate = (S)-3-methyl-2-oxopentanoate + H2O. It participates in amino-acid biosynthesis; L-isoleucine biosynthesis; L-isoleucine from 2-oxobutanoate: step 3/4. The protein operates within amino-acid biosynthesis; L-valine biosynthesis; L-valine from pyruvate: step 3/4. Its function is as follows. Functions in the biosynthesis of branched-chain amino acids. Catalyzes the dehydration of (2R,3R)-2,3-dihydroxy-3-methylpentanoate (2,3-dihydroxy-3-methylvalerate) into 2-oxo-3-methylpentanoate (2-oxo-3-methylvalerate) and of (2R)-2,3-dihydroxy-3-methylbutanoate (2,3-dihydroxyisovalerate) into 2-oxo-3-methylbutanoate (2-oxoisovalerate), the penultimate precursor to L-isoleucine and L-valine, respectively. The protein is Dihydroxy-acid dehydratase of Bartonella tribocorum (strain CIP 105476 / IBS 506).